We begin with the raw amino-acid sequence, 439 residues long: Xaa-Pro dipeptidase (439 aa).

Positions 244, 255, 335, 380, and 419 each coordinate Mn(2+).

Belongs to the peptidase M24B family. Bacterial-type prolidase subfamily. Mn(2+) serves as cofactor.

The catalysed reaction is Xaa-L-Pro dipeptide + H2O = an L-alpha-amino acid + L-proline. Its function is as follows. Splits dipeptides with a prolyl residue in the C-terminal position. This is Xaa-Pro dipeptidase from Shewanella sp. (strain MR-4).